Reading from the N-terminus, the 329-residue chain is Trans-1,2-dihydrobenzene-1,2-diol dehydrogenase (329 aa).

Belongs to the Gfo/Idh/MocA family. As to quaternary structure, homodimer. In terms of tissue distribution, lens, liver and small intestine.

It catalyses the reaction (1R,2R)-1,2-dihydrobenzene-1,2-diol + NADP(+) = catechol + NADPH + H(+). It carries out the reaction D-xylose + NADP(+) = D-xylono-1,5-lactone + NADPH + H(+). Stimulated by various salts. This is Trans-1,2-dihydrobenzene-1,2-diol dehydrogenase (DHDH) from Oryctolagus cuniculus (Rabbit).